A 2130-amino-acid polypeptide reads, in one-letter code: Bromodomain adjacent to zinc finger domain protein 2B (2130 aa).

Disordered regions lie at residues 1–42 (MESG…TGAA), 82–118 (LFAP…SLNG), 151–293 (GGRK…QKQP), 491–518 (KTTG…PVSN), 543–633 (VDSD…SSIG), 756–790 (EGRR…GSTE), and 944–966 (RKKA…LNKE). The segment covering 8 to 33 (TSSSVSSTAAASSPVSSTPSVASAVS) has biased composition (low complexity). Residues 183–206 (ESSSNSDSDSGSSSDTSSEGISSS) show a composition bias toward low complexity. A compositionally biased stretch (acidic residues) spans 207–234 (DSDDLEEDEEEEEDQSAEESEDDESDSE). A compositionally biased stretch (basic and acidic residues) spans 250-270 (GVKDMKTDGQKAHEKSQEKRT). Polar residues predominate over residues 272 to 283 (QQIPLVSDSQTH). Residues 284–293 (SSFQSQQKQP) are compositionally biased toward low complexity. Polar residues predominate over residues 492-505 (TTGNRTLVVPSTSP). Residues 543–554 (VDSDAPSSKESD) are compositionally biased toward basic and acidic residues. Residues 555–611 (DSNDDDDDDEDEDEDDEDDDSDDSQSESDSNSESDTDGSEDEDDEDDKDQDESDTDT) are compositionally biased toward acidic residues. A compositionally biased stretch (low complexity) spans 623–633 (TGSSIKSSSIG). In terms of domain architecture, MBD spans 687-762 (VTDERELRVP…RAMEGRRGRP (76 aa)). Residues 756–775 (EGRRGRPPNPDRQHSREESR) show a composition bias toward basic and acidic residues. Positions 797 to 984 (AKLLRKLQAQ…ELEMAKELKK (188 aa)) form a coiled coil. The DDT domain occupies 1010–1075 (GSTFSDCLMI…VTAAVCDPGL (66 aa)). Disordered stretches follow at residues 1186–1265 (TGKR…DQTV), 1431–1454 (SLCS…NLFS), 1499–1545 (VTHV…PFAM), and 1773–1795 (HKKH…ERKN). Acidic residues predominate over residues 1220–1244 (SDYDDDDDDDSDDQADEDDEDEEDK). Basic and acidic residues predominate over residues 1245-1254 (EDKKGKKAEV). The segment covering 1514-1526 (SHPPSKSPSPVPS) has biased composition (pro residues). A PHD-type zinc finger spans residues 1895 to 1945 (KVYCQICRKGDNEELLLLCDGCDKGCHTYCHRPKITTIPDGDWFCPACIAK). Residues 1957 to 2019 (QIKGKKSNEQ…KQENFTAIKK (63 aa)) form a disordered region. A compositionally biased stretch (basic and acidic residues) spans 1991–2002 (GKTEPKKRKMDE). A compositionally biased stretch (polar residues) spans 2004–2014 (VSVSQGKQENF). In terms of domain architecture, Bromo spans 2022–2126 (RDDSKDLAIC…KYFEKKWTEI (105 aa)).

This sequence belongs to the WAL family.

It localises to the nucleus. Regulatory subunit of the ATP-dependent BRF-1 and BRF-5 ISWI chromatin remodeling complexes, which form ordered nucleosome arrays on chromatin and facilitate access to DNA during DNA-templated processes such as DNA replication, transcription, and repair. Both complexes regulate the spacing of nucleosomes along the chromatin and have the ability to slide mononucleosomes to the center of a DNA template. The BRF-1 ISWI chromatin remodeling complex has a lower ATP hydrolysis rate than the BRF-5 ISWI chromatin remodeling complex. Chromatin reader protein. Represses the expression of mitochondrial function-related genes, perhaps by transcriptional regulation. The polypeptide is Bromodomain adjacent to zinc finger domain protein 2B (BAZ2B) (Gallus gallus (Chicken)).